A 493-amino-acid chain; its full sequence is Angiopoietin-related protein 2 (493 aa).

Residues 1–22 (MRPLCVTCWWLGLLAAMGAVAG) form the signal peptide. Coiled-coil stretches lie at residues 76–115 (PEVL…VDGG) and 152–206 (ALEL…HCQR). N-linked (GlcNAc...) asparagine glycosylation is found at asparagine 164 and asparagine 192. A Fibrinogen C-terminal domain is found at 269–489 (DKPSGPWRDC…KVVMMIRPNP (221 aa)). Intrachain disulfides connect cysteine 278-cysteine 307 and cysteine 430-cysteine 443.

Post-translationally, N-glycosylated. Widely expressed in heart, small intestine, spleen and stomach. Also found in lower levels in colon, ovary, adrenal gland, skeletal muscle and in prostate.

Its subcellular location is the secreted. In terms of biological role, induces sprouting in endothelial cells through an autocrine and paracrine action. The chain is Angiopoietin-related protein 2 (ANGPTL2) from Homo sapiens (Human).